Consider the following 489-residue polypeptide: Occludin (489 aa).

Over 1–51 the chain is Cytoplasmic; that stretch reads MMYEKRSYTGYGHPSSHYDYPPPSGPPGSFYLADVPPQHFYQWRSPPGIVR. The 204-residue stretch at 45–248 folds into the MARVEL domain; it reads SPPGIVRILQ…ICYFAQKTRH (204 aa). Residues 52–74 traverse the membrane as a helical segment; that stretch reads ILQGSVVILCLVIFACVASTLAW. The Extracellular portion of the chain corresponds to 75–112; that stretch reads EYYGSGGLLGYGGGLGSYYNGYYGGYNGYYYGGLTNPR. Residues 113-137 form a helical membrane-spanning segment; that stretch reads AANGFMIAMAVLCFLVTLGLVIAGL. Residues 138 to 147 lie on the Cytoplasmic side of the membrane; that stretch reads SKASGARSRR. A helical membrane pass occupies residues 148–172; it reads FYLLVAVLSGLLAFVMLIASIVYVV. Topologically, residues 173–222 are extracellular; the sequence is GVNPRAGLGASSGSLYYNQMLMLCNQMMSPVAGGIMNQYLYHYCMVDPQE. Cysteine 196 and cysteine 216 are oxidised to a cystine. The helical transmembrane segment at 223 to 244 threads the bilayer; sequence AVAIVCGFLTVILLCVICYFAQ. At 245–489 the chain is on the cytoplasmic side; the sequence is KTRHKIWKYG…MVGGYDQSRS (245 aa). Serine 280 bears the Phosphoserine mark. A Phosphothreonine modification is found at threonine 285. Serine 300 carries the phosphoserine modification. The segment at 308 to 382 is disordered; it reads PAQENGYGHS…ESSGEQNRDD (75 aa). The segment covering 322 to 332 has biased composition (pro residues); sequence PSVPPPEGPSP. Basic residues predominate over residues 345 to 354; sequence PARRGHRQRP. Phosphotyrosine is present on residues tyrosine 364 and tyrosine 368. Residues 365 to 377 are compositionally biased toward polar residues; that stretch reads ETDYTTAAESSGE. A phosphothreonine; by PKC/PRKCH mark is found at threonine 369 and threonine 370. A Phosphoserine modification is found at serine 374. One can recognise an OCEL domain in the interval 381-489; it reads DDWASLYPPI…MVGGYDQSRS (109 aa). A coiled-coil region spans residues 407–434; it reads LQRYKALCAEMDDIGTQLRQLSHELDCL. A Phosphoserine modification is found at serine 457.

Belongs to the ELL/occludin family. As to quaternary structure, interacts with TJP1/ZO1. Interacts with VAPA. Interacts with CLDN1, CLDN6, CLDN9, CLDN11, CLDN12 and CLDN17. Interacts with PLSCR1. Interacts with LSR, ILDR1 and ILDR2. Interacts with TJP2/ZO2. In terms of processing, dephosphorylated by PTPRJ. As to expression, localized at tight junctions of both epithelial and endothelial cells.

It is found in the cell membrane. The protein resides in the cell junction. Its subcellular location is the tight junction. Its function is as follows. May play a role in the formation and regulation of the tight junction (TJ) paracellular permeability barrier. In Potorous tridactylus (Potoroo), this protein is Occludin (OCLN).